Here is a 206-residue protein sequence, read N- to C-terminus: Thiamine-phosphate synthase (206 aa).

4-amino-2-methyl-5-(diphosphooxymethyl)pyrimidine contacts are provided by residues 36–40 and N68; that span reads QLRAK. Mg(2+)-binding residues include D69 and D88. S105 serves as a coordination point for 4-amino-2-methyl-5-(diphosphooxymethyl)pyrimidine. Residue 131–133 participates in 2-[(2R,5Z)-2-carboxy-4-methylthiazol-5(2H)-ylidene]ethyl phosphate binding; the sequence is TPT. Position 134 (K134) interacts with 4-amino-2-methyl-5-(diphosphooxymethyl)pyrimidine. A 2-[(2R,5Z)-2-carboxy-4-methylthiazol-5(2H)-ylidene]ethyl phosphate-binding site is contributed by G162.

Belongs to the thiamine-phosphate synthase family. Mg(2+) serves as cofactor.

The catalysed reaction is 2-[(2R,5Z)-2-carboxy-4-methylthiazol-5(2H)-ylidene]ethyl phosphate + 4-amino-2-methyl-5-(diphosphooxymethyl)pyrimidine + 2 H(+) = thiamine phosphate + CO2 + diphosphate. It catalyses the reaction 2-(2-carboxy-4-methylthiazol-5-yl)ethyl phosphate + 4-amino-2-methyl-5-(diphosphooxymethyl)pyrimidine + 2 H(+) = thiamine phosphate + CO2 + diphosphate. The enzyme catalyses 4-methyl-5-(2-phosphooxyethyl)-thiazole + 4-amino-2-methyl-5-(diphosphooxymethyl)pyrimidine + H(+) = thiamine phosphate + diphosphate. Its pathway is cofactor biosynthesis; thiamine diphosphate biosynthesis; thiamine phosphate from 4-amino-2-methyl-5-diphosphomethylpyrimidine and 4-methyl-5-(2-phosphoethyl)-thiazole: step 1/1. In terms of biological role, condenses 4-methyl-5-(beta-hydroxyethyl)thiazole monophosphate (THZ-P) and 2-methyl-4-amino-5-hydroxymethyl pyrimidine pyrophosphate (HMP-PP) to form thiamine monophosphate (TMP). In Thermus thermophilus (strain ATCC BAA-163 / DSM 7039 / HB27), this protein is Thiamine-phosphate synthase.